We begin with the raw amino-acid sequence, 325 residues long: Elongation factor P--(R)-beta-lysine ligase (325 aa).

76-78 (SPE) is a substrate binding site. ATP-binding positions include 100-102 (RNE) and Asn-109. Substrate is bound at residue Tyr-118. 244–245 (EL) is an ATP binding site. Glu-251 provides a ligand contact to substrate. ATP is bound at residue Gly-300.

This sequence belongs to the class-II aminoacyl-tRNA synthetase family. EpmA subfamily. Homodimer.

It carries out the reaction D-beta-lysine + L-lysyl-[protein] + ATP = N(6)-((3R)-3,6-diaminohexanoyl)-L-lysyl-[protein] + AMP + diphosphate + H(+). Its function is as follows. With EpmB is involved in the beta-lysylation step of the post-translational modification of translation elongation factor P (EF-P). Catalyzes the ATP-dependent activation of (R)-beta-lysine produced by EpmB, forming a lysyl-adenylate, from which the beta-lysyl moiety is then transferred to the epsilon-amino group of a conserved specific lysine residue in EF-P. This Klebsiella pneumoniae (strain 342) protein is Elongation factor P--(R)-beta-lysine ligase.